The sequence spans 457 residues: Cysteine--tRNA ligase (457 aa).

Cys-27 lines the Zn(2+) pocket. The short motif at 29–39 is the 'HIGH' region element; the sequence is PTVYDFAHIGN. Residues Cys-211, His-236, and Glu-240 each coordinate Zn(2+). The 'KMSKS' region motif lies at 269–273; it reads KMSKS. Residue Lys-272 participates in ATP binding.

Belongs to the class-I aminoacyl-tRNA synthetase family. As to quaternary structure, monomer. It depends on Zn(2+) as a cofactor.

Its subcellular location is the cytoplasm. It catalyses the reaction tRNA(Cys) + L-cysteine + ATP = L-cysteinyl-tRNA(Cys) + AMP + diphosphate. In Ehrlichia ruminantium (strain Gardel), this protein is Cysteine--tRNA ligase.